A 497-amino-acid polypeptide reads, in one-letter code: Sestrin homolog (497 aa).

Residues Ser185 and Ser190 each carry the phosphoserine modification. The segment covering 226 to 241 (NANPDYDSQTAASSNG) has biased composition (polar residues). The interval 226–255 (NANPDYDSQTAASSNGGAPPDSANAVADGP) is disordered.

This sequence belongs to the sestrin family. As to quaternary structure, associates with the GATOR2 complex; the interaction is probably direct. Associates with the GATOR1 complex; the interaction is probably indirect and mediated by the GATOR2 complex. In terms of tissue distribution, highly expressed in muscle-enriched tissues (at protein level).

Its subcellular location is the nucleus. It localises to the cytoplasm. In terms of biological role, functions as a negative feedback regulator of mTOR function. The chain is Sestrin homolog from Drosophila melanogaster (Fruit fly).